The following is a 758-amino-acid chain: Aspartyl/asparaginyl beta-hydroxylase (758 aa).

Positions 1–46 (MAQRKNAKSSGNSSSSGSGSGSTSAGSSSPGARRETKHGGHKNGRK) are disordered. Topologically, residues 1-53 (MAQRKNAKSSGNSSSSGSGSGSTSAGSSSPGARRETKHGGHKNGRKGGLSGTS) are cytoplasmic. The span at 9–31 (SSGNSSSSGSGSGSTSAGSSSPG) shows a compositional bias: low complexity. Ser-14 is subject to Phosphoserine. Residues 54 to 74 (FFTWFMVIALLGVWTSVAVVW) form a helical; Signal-anchor for type II membrane protein membrane-spanning segment. An N-linked (GlcNAc...) asparagine glycan is attached at Leu-64. Residues 75–758 (FDLVDYEEVL…PQQRRSLPAI (684 aa)) lie on the Lumenal side of the membrane. Residues Asp-91, Asp-93, Asp-95, Asp-97, and Asp-102 each coordinate Ca(2+). 2 disordered regions span residues 111 to 140 (ERST…EAEP) and 304 to 324 (EEQQ…EQKA). Basic and acidic residues predominate over residues 313 to 324 (TNRKTDDPEQKA). A TPR 1 repeat occupies 341-374 (IKAELDAAEKLRKRGKIEEAVNAFKELVRKYPQS). An N-linked (GlcNAc...) asparagine glycan is attached at Asn-452. TPR repeat units lie at residues 454–487 (TSLK…TPND), 489–521 (FAKV…GDPG), and 525–557 (GRFY…GHFA). Residue Trp-625 coordinates 2-oxoglutarate. Cys-641 and Cys-648 form a disulfide bridge. Ser-668 is a binding site for 2-oxoglutarate. Fe cation is bound at residue His-679. Position 688-690 (688-690 (RMH)) interacts with 2-oxoglutarate. Asn-706 carries N-linked (GlcNAc...) asparagine glycosylation. A Fe cation-binding site is contributed by His-725. Arg-735 serves as a coordination point for 2-oxoglutarate.

It belongs to the aspartyl/asparaginyl beta-hydroxylase family. As to quaternary structure, monomer. Isoform 8 interacts with ORAI1 and STIM1. Isoform 4 interacts with CASQ2. Fe cation serves as cofactor. Isoform 1 is detected in all tissues tested. Isoform 8 is mainly expressed in pancreas, heart, brain, kidney and liver. Isoform 8 is expressed in kidney (at protein level).

Its subcellular location is the endoplasmic reticulum membrane. It is found in the sarcoplasmic reticulum membrane. It carries out the reaction L-aspartyl-[protein] + 2-oxoglutarate + O2 = 3-hydroxy-L-aspartyl-[protein] + succinate + CO2. Functionally, specifically hydroxylates an Asp or Asn residue in certain epidermal growth factor-like (EGF) domains of a number of proteins. Membrane-bound Ca(2+)-sensing protein, which is a structural component of the ER-plasma membrane junctions. Isoform 8 regulates the activity of Ca(+2) released-activated Ca(+2) (CRAC) channels in T-cells. This chain is Aspartyl/asparaginyl beta-hydroxylase (ASPH), found in Homo sapiens (Human).